The following is a 37-amino-acid chain: ATP synthase subunit O, mitochondrial (37 aa).

It belongs to the ATPase delta chain family. As to quaternary structure, F-type ATPases have 2 components, CF(1) - the catalytic core - and CF(0) - the membrane proton channel. CF(1) has five subunits: alpha(3), beta(3), gamma(1), delta(1), epsilon(1). CF(0) has three main subunits: a, b and c.

The protein localises to the mitochondrion. It is found in the mitochondrion inner membrane. Mitochondrial membrane ATP synthase (F(1)F(0) ATP synthase or Complex V) produces ATP from ADP in the presence of a proton gradient across the membrane which is generated by electron transport complexes of the respiratory chain. F-type ATPases consist of two structural domains, F(1) - containing the extramembraneous catalytic core and F(0) - containing the membrane proton channel, linked together by a central stalk and a peripheral stalk. During catalysis, ATP synthesis in the catalytic domain of F(1) is coupled via a rotary mechanism of the central stalk subunits to proton translocation. Part of the complex F(0) domain and the peripheric stalk, which acts as a stator to hold the catalytic alpha(3)beta(3) subcomplex and subunit a/ATP6 static relative to the rotary elements. This is ATP synthase subunit O, mitochondrial from Solanum tuberosum (Potato).